The chain runs to 151 residues: Putative esterase VNG_1336C (151 aa).

It belongs to the thioesterase PaaI family.

The polypeptide is Putative esterase VNG_1336C (Halobacterium salinarum (strain ATCC 700922 / JCM 11081 / NRC-1) (Halobacterium halobium)).